The following is a 132-amino-acid chain: Large ribosomal subunit protein uL22c (132 aa).

Belongs to the universal ribosomal protein uL22 family. Part of the 50S ribosomal subunit.

The protein resides in the plastid. It localises to the chloroplast. This protein binds specifically to 23S rRNA. In terms of biological role, the globular domain of the protein is located near the polypeptide exit tunnel on the outside of the subunit, while an extended beta-hairpin is found that lines the wall of the exit tunnel in the center of the 70S ribosome. The polypeptide is Large ribosomal subunit protein uL22c (rpl22) (Populus trichocarpa (Western balsam poplar)).